A 276-amino-acid chain; its full sequence is WIMGHMVNAIYQIDEFVNLGANSIETDVSFDDSANPEYTYHGVPCDCRRWCKKWEYFNNFLKALREATTPGDSKYHEKLVLVVFDLKTNSLYDHQAYDAGKKLAKNLLQHYWNNGNNGGRAYIVLSIPNLSHYKLITGFKETLKNEGHPELMEKVGFDFSGNDNIDQVAKAYKKAGVTGHVWQSDGITNCIASFIRGLDRAKEAVANRDSSNGFINKVYYWTVDKRATTREALDAEVDGIMTNDPDVIADVLNESAYKAKFRIATYDDNPWETFKK.

The active site involves His-5. Mg(2+) contacts are provided by Glu-25 and Asp-27. Catalysis depends on His-41, which acts as the Nucleophile. Disulfide bonds link Cys-45/Cys-51 and Cys-47/Cys-190. Asp-85 contributes to the Mg(2+) binding site. Asn-129 and Asn-253 each carry an N-linked (GlcNAc...) asparagine glycan.

This sequence belongs to the arthropod phospholipase D family. Class II subfamily. Mg(2+) serves as cofactor. Expressed by the venom gland.

The protein resides in the secreted. The catalysed reaction is an N-(acyl)-sphingosylphosphocholine = an N-(acyl)-sphingosyl-1,3-cyclic phosphate + choline. It carries out the reaction an N-(acyl)-sphingosylphosphoethanolamine = an N-(acyl)-sphingosyl-1,3-cyclic phosphate + ethanolamine. It catalyses the reaction a 1-acyl-sn-glycero-3-phosphocholine = a 1-acyl-sn-glycero-2,3-cyclic phosphate + choline. The enzyme catalyses a 1-acyl-sn-glycero-3-phosphoethanolamine = a 1-acyl-sn-glycero-2,3-cyclic phosphate + ethanolamine. Functionally, dermonecrotic toxins cleave the phosphodiester linkage between the phosphate and headgroup of certain phospholipids (sphingolipid and lysolipid substrates), forming an alcohol (often choline) and a cyclic phosphate. This toxin acts on sphingomyelin (SM). It may also act on ceramide phosphoethanolamine (CPE), lysophosphatidylcholine (LPC) and lysophosphatidylethanolamine (LPE), but not on lysophosphatidylserine (LPS), and lysophosphatidylglycerol (LPG). It acts by transphosphatidylation, releasing exclusively cyclic phosphate products as second products. Induces dermonecrosis, hemolysis, increased vascular permeability, edema, inflammatory response, and platelet aggregation. In Loxosceles sabina (Tucson recluse spider), this protein is Dermonecrotic toxin LsaSicTox-alphaIB2i.